Here is a 156-residue protein sequence, read N- to C-terminus: Ribonuclease H (156 aa).

In terms of domain architecture, RNase H type-1 spans 2-144; the sequence is TMKNVQAFTD…CDVLARTQAS (143 aa). Mg(2+) contacts are provided by Asp-11, Glu-49, Asp-71, and Asp-136.

This sequence belongs to the RNase H family. In terms of assembly, monomer. It depends on Mg(2+) as a cofactor.

The protein resides in the cytoplasm. The catalysed reaction is Endonucleolytic cleavage to 5'-phosphomonoester.. Endonuclease that specifically degrades the RNA of RNA-DNA hybrids. This is Ribonuclease H from Nitratidesulfovibrio vulgaris (strain DSM 19637 / Miyazaki F) (Desulfovibrio vulgaris).